A 395-amino-acid chain; its full sequence is NADH-quinone oxidoreductase subunit D (395 aa).

This sequence belongs to the complex I 49 kDa subunit family. As to quaternary structure, NDH-1 is composed of 14 different subunits. Subunits NuoB, C, D, E, F, and G constitute the peripheral sector of the complex.

The protein resides in the cell inner membrane. It catalyses the reaction a quinone + NADH + 5 H(+)(in) = a quinol + NAD(+) + 4 H(+)(out). In terms of biological role, NDH-1 shuttles electrons from NADH, via FMN and iron-sulfur (Fe-S) centers, to quinones in the respiratory chain. The immediate electron acceptor for the enzyme in this species is believed to be a menaquinone. Couples the redox reaction to proton translocation (for every two electrons transferred, four hydrogen ions are translocated across the cytoplasmic membrane), and thus conserves the redox energy in a proton gradient. This chain is NADH-quinone oxidoreductase subunit D, found in Chlorobium luteolum (strain DSM 273 / BCRC 81028 / 2530) (Pelodictyon luteolum).